The following is a 785-amino-acid chain: E3 UFM1-protein ligase 1 homolog (785 aa).

The tract at residues 404 to 482 is disordered; sequence NASFQDQDDD…AGGGGGNKKT (79 aa).

It belongs to the UFL1 family.

In terms of biological role, E3 UFM1-protein ligase that mediates ufmylation of target proteins. This Drosophila persimilis (Fruit fly) protein is E3 UFM1-protein ligase 1 homolog.